Reading from the N-terminus, the 252-residue chain is Ribonuclease 3 (252 aa).

Residues 3-125 enclose the RNase III domain; that stretch reads LATLETRLDH…IFGAAFLDGG (123 aa). Glutamate 38 lines the Mg(2+) pocket. Aspartate 42 is a catalytic residue. Mg(2+) contacts are provided by aspartate 111 and glutamate 114. Glutamate 114 is a catalytic residue. Positions 152 to 222 constitute a DRBM domain; that stretch reads DAKTLLQEFL…AKLALEAAQA (71 aa).

It belongs to the ribonuclease III family. In terms of assembly, homodimer. Mg(2+) serves as cofactor.

The protein localises to the cytoplasm. The catalysed reaction is Endonucleolytic cleavage to 5'-phosphomonoester.. Digests double-stranded RNA. Involved in the processing of primary rRNA transcript to yield the immediate precursors to the large and small rRNAs (23S and 16S). Processes some mRNAs, and tRNAs when they are encoded in the rRNA operon. Processes pre-crRNA and tracrRNA of type II CRISPR loci if present in the organism. The chain is Ribonuclease 3 from Bordetella petrii (strain ATCC BAA-461 / DSM 12804 / CCUG 43448).